We begin with the raw amino-acid sequence, 872 residues long: Alanine--tRNA ligase (872 aa).

Zn(2+) is bound by residues histidine 567, histidine 571, cysteine 669, and histidine 673.

This sequence belongs to the class-II aminoacyl-tRNA synthetase family. Zn(2+) is required as a cofactor.

It localises to the cytoplasm. It carries out the reaction tRNA(Ala) + L-alanine + ATP = L-alanyl-tRNA(Ala) + AMP + diphosphate. Its function is as follows. Catalyzes the attachment of alanine to tRNA(Ala) in a two-step reaction: alanine is first activated by ATP to form Ala-AMP and then transferred to the acceptor end of tRNA(Ala). Also edits incorrectly charged Ser-tRNA(Ala) and Gly-tRNA(Ala) via its editing domain. This Streptococcus agalactiae serotype III (strain NEM316) protein is Alanine--tRNA ligase.